We begin with the raw amino-acid sequence, 1083 residues long: Carbamoyl phosphate synthase large chain (1083 aa).

Residues 1–402 (MPRRDDIKKI…SFQKALRGLE (402 aa)) form a carboxyphosphate synthetic domain region. Residues Arg-129, Arg-169, Gly-175, Gly-176, Glu-208, Ile-210, Glu-215, Gly-241, Val-242, His-243, Gln-285, and Glu-299 each contribute to the ATP site. The 196-residue stretch at 133-328 (KQAMDKIGLD…IAKIAAKLAV (196 aa)) folds into the ATP-grasp 1 domain. Mg(2+) is bound by residues Gln-285, Glu-299, and Asn-301. Mn(2+) contacts are provided by Gln-285, Glu-299, and Asn-301. The interval 403–557 (VGAFGFGSDP…YSTYESETEV (155 aa)) is oligomerization domain. Positions 558–944 (PAKGDKKRVV…AFAKSQLAAG (387 aa)) are carbamoyl phosphate synthetic domain. In terms of domain architecture, ATP-grasp 2 spans 683–878 (SSLIDELGLR…VANLATKVMA (196 aa)). ATP contacts are provided by Arg-719, Arg-758, Leu-760, Glu-765, Gly-790, Val-791, His-792, Ser-793, Gln-833, and Glu-849. Residues Gln-833, Glu-849, and Asn-851 each coordinate Mg(2+). Residues Gln-833, Glu-849, and Asn-851 each contribute to the Mn(2+) site. The region spanning 945–1083 (TVLPESGKIF…SLQRRYAQNV (139 aa)) is the MGS-like domain. Positions 945-1083 (TVLPESGKIF…SLQRRYAQNV (139 aa)) are allosteric domain.

The protein belongs to the CarB family. Composed of two chains; the small (or glutamine) chain promotes the hydrolysis of glutamine to ammonia, which is used by the large (or ammonia) chain to synthesize carbamoyl phosphate. Tetramer of heterodimers (alpha,beta)4. Requires Mg(2+) as cofactor. Mn(2+) serves as cofactor.

It carries out the reaction hydrogencarbonate + L-glutamine + 2 ATP + H2O = carbamoyl phosphate + L-glutamate + 2 ADP + phosphate + 2 H(+). The enzyme catalyses hydrogencarbonate + NH4(+) + 2 ATP = carbamoyl phosphate + 2 ADP + phosphate + 2 H(+). Its pathway is amino-acid biosynthesis; L-arginine biosynthesis; carbamoyl phosphate from bicarbonate: step 1/1. It functions in the pathway pyrimidine metabolism; UMP biosynthesis via de novo pathway; (S)-dihydroorotate from bicarbonate: step 1/3. In terms of biological role, large subunit of the glutamine-dependent carbamoyl phosphate synthetase (CPSase). CPSase catalyzes the formation of carbamoyl phosphate from the ammonia moiety of glutamine, carbonate, and phosphate donated by ATP, constituting the first step of 2 biosynthetic pathways, one leading to arginine and/or urea and the other to pyrimidine nucleotides. The large subunit (synthetase) binds the substrates ammonia (free or transferred from glutamine from the small subunit), hydrogencarbonate and ATP and carries out an ATP-coupled ligase reaction, activating hydrogencarbonate by forming carboxy phosphate which reacts with ammonia to form carbamoyl phosphate. This chain is Carbamoyl phosphate synthase large chain, found in Rhodopirellula baltica (strain DSM 10527 / NCIMB 13988 / SH1).